Reading from the N-terminus, the 469-residue chain is Probable periplasmic serine endoprotease DegP-like (469 aa).

A signal peptide spans 1-25 (MNRLLKQVCMVVVSSFMMASMLTHA). Active-site charge relay system residues include histidine 114, aspartate 144, and serine 217. Residues 215–217 (GNS) and 272–276 (LGVLI) contribute to the substrate site. PDZ domains are found at residues 261–352 (LKSD…YRDG) and 358–458 (SVTL…IRQG).

This sequence belongs to the peptidase S1C family.

It is found in the periplasm. The catalysed reaction is Acts on substrates that are at least partially unfolded. The cleavage site P1 residue is normally between a pair of hydrophobic residues, such as Val-|-Val.. Might be efficient in the degradation of transiently denatured and unfolded proteins which accumulate in the periplasm following stress conditions. This Marinomonas sp. (strain MWYL1) protein is Probable periplasmic serine endoprotease DegP-like.